A 49-amino-acid polypeptide reads, in one-letter code: uncharacterized protein (49 aa).

The protein belongs to the metallo-dependent hydrolases superfamily. TatD-type hydrolase family. A divalent metal cation is required as a cofactor.

This is an uncharacterized protein from Geobacillus stearothermophilus (Bacillus stearothermophilus).